The following is a 755-amino-acid chain: MSSQRWLWRNQHSVQTNIGSREKDLKITKTKKIKKKHERAYELLAEAAYSDPFAALGPFIDDGEGSLRVWMPGANKVELLVNGEPRVALERDGDSGFILKEQRDLHLTHYRLAVDWNGVEQIIDDPYQYHNIYQEYEHLHTPKDMYHYMGAHFVTLERGGENISGVRFLVYAPHASAVSLVGCFNQWDGRRHPMQRLDYGIWGLFIPGLEEGVQYKFELKGPNGEGLPHKQDPWGFYSEQYPSFASITYDHKRYQWQDAKWQNRAVTQKRDEALSFYELHAGSWKRDGKGDFLNYRELAEQLVPYLVDMGYTHVELMPVSEHPFYGSWGYQPVGLFAPTSRYGSPDDFKFFVDACHQAGIGVVLDWVPAHFPSDDHGLANFDGTPLFHDPDPRRGWHQDWNSYIYDLGREHVRRFLVSNALYWFEQFHIDGIRVDAVASMLYLDYSRSHDQWVPNVDGGNENYDAIATLKWMNEEVYKHFPNAMTIAEESTAFPGVSAPTFMGGLGFGFKWNMGWMHDSLSYVKEDPVHRKYHHNTITFPLVYAHSENYVLSLSHDEVVYGKGSIHNKMPGDEWQQTANLRAYYGYMYGQPGKKLNFMGAEIGQTAEWNHDDQLQWFLLEYERHQGVQKLMRDLNHLYRNEAAMHDQDCVPAGFEWRLQDEADASILAHERISKEGERILIITNFTPVPHERFRLGVPNVGQYELLLNTDDSKYGGSDFKVLTSVKTEKVESESLPQSLELRLPPLSTVFYKLHK.

Residue D435 is the Nucleophile of the active site. The Proton donor role is filled by E488.

It belongs to the glycosyl hydrolase 13 family. GlgB subfamily. Monomer.

The enzyme catalyses Transfers a segment of a (1-&gt;4)-alpha-D-glucan chain to a primary hydroxy group in a similar glucan chain.. It functions in the pathway glycan biosynthesis; glycogen biosynthesis. Its function is as follows. Catalyzes the formation of the alpha-1,6-glucosidic linkages in glycogen by scission of a 1,4-alpha-linked oligosaccharide from growing alpha-1,4-glucan chains and the subsequent attachment of the oligosaccharide to the alpha-1,6 position. This chain is 1,4-alpha-glucan branching enzyme GlgB, found in Vibrio parahaemolyticus serotype O3:K6 (strain RIMD 2210633).